An 891-amino-acid polypeptide reads, in one-letter code: Protein translocase subunit SecA 1 (891 aa).

ATP-binding positions include Gln-85, 103–107 (GEGKT), and Asp-491. Zn(2+) contacts are provided by Cys-877, Cys-879, Cys-888, and Cys-889.

This sequence belongs to the SecA family. Monomer and homodimer. Part of the essential Sec protein translocation apparatus which comprises SecA, SecYEG and auxiliary proteins SecDF. Other proteins may also be involved. Requires Zn(2+) as cofactor.

It is found in the cell membrane. The protein localises to the cytoplasm. The enzyme catalyses ATP + H2O + cellular proteinSide 1 = ADP + phosphate + cellular proteinSide 2.. Part of the Sec protein translocase complex. Interacts with the SecYEG preprotein conducting channel. Has a central role in coupling the hydrolysis of ATP to the transfer of proteins into and across the cell membrane, serving as an ATP-driven molecular motor driving the stepwise translocation of polypeptide chains across the membrane. This chain is Protein translocase subunit SecA 1, found in Clostridioides difficile (strain 630) (Peptoclostridium difficile).